The primary structure comprises 108 residues: Protein YcgL (108 aa).

The YcgL domain occupies 12 to 96 (MFCVIYRSSK…SPEDLLKQHL (85 aa)).

The polypeptide is Protein YcgL (Shigella dysenteriae serotype 1 (strain Sd197)).